The following is a 137-amino-acid chain: Small heat shock protein IbpA (137 aa).

In terms of domain architecture, sHSP spans 28–137; sequence SQSNGGYPPY…ANKPRRIEIN (110 aa).

This sequence belongs to the small heat shock protein (HSP20) family. As to quaternary structure, monomer. Forms homomultimers of about 100-150 subunits at optimal growth temperatures. Conformation changes to monomers at high temperatures or high ionic concentrations.

Its subcellular location is the cytoplasm. In terms of biological role, associates with aggregated proteins, together with IbpB, to stabilize and protect them from irreversible denaturation and extensive proteolysis during heat shock and oxidative stress. Aggregated proteins bound to the IbpAB complex are more efficiently refolded and reactivated by the ATP-dependent chaperone systems ClpB and DnaK/DnaJ/GrpE. Its activity is ATP-independent. In Salmonella choleraesuis (strain SC-B67), this protein is Small heat shock protein IbpA.